Consider the following 362-residue polypeptide: Zinc transporter 9 (362 aa).

Positions 1-21 (MAFDLKLTACLLLAVFSLAAA) are cleaved as a signal peptide. The Extracellular segment spans residues 22–42 (ADCECQPSDEGHDAAKSRTLK). A helical membrane pass occupies residues 43 to 63 (VIAIFCILVGSSAGCAIPSLG). Residues 64–74 (RRFPALRPDTS) are Cytoplasmic-facing. The chain crosses the membrane as a helical span at residues 75–95 (LFFALKAFAAGVILATAFVHI). Residues 96–120 (LPVSFDKLGSPCLVDGPWRKYPFTG) are Extracellular-facing. A helical transmembrane segment spans residues 121-141 (LVAMLAAVATLLLDTIATGYF). Residues 142-207 (LQRAQDSRGA…EDRAKLVRHR (66 aa)) lie on the Cytoplasmic side of the membrane. A helical membrane pass occupies residues 208-228 (VISQVFELGIIVHSIIIGISL). Residues 229–239 (GASESPSTIRP) lie on the Extracellular side of the membrane. Residues 240–260 (LVAALTFHQFFEGIGLGGCIV) form a helical membrane-spanning segment. Residues 261–269 (QARFHLKSA) are Cytoplasmic-facing. The helical transmembrane segment at 270–290 (VTMAIFFSLTTPVGIMIGIGI) threads the bilayer. Residues 291–301 (SSAYNENSPTA) lie on the Extracellular side of the membrane. Residues 302–322 (LIVEGILDAAAAGILNYMALV) traverse the membrane as a helical segment. Residues 323–341 (DLLAEDFMNPRVRKSGRLQ) are Cytoplasmic-facing. A helical transmembrane segment spans residues 342–362 (LIISILLLVGIALMSLLGIWA).

This sequence belongs to the ZIP transporter (TC 2.A.5) family.

The protein resides in the cell membrane. Zinc transporter that may be involved in zinc uptake from the rhizosphere. The sequence is that of Zinc transporter 9 (ZIP9) from Oryza sativa subsp. japonica (Rice).